The chain runs to 198 residues: Myb-related protein 340 (198 aa).

2 HTH myb-type domains span residues 10–62 and 63–117; these read DVEV…LNYL and RPDV…IQKH. 2 DNA-binding regions (H-T-H motif) span residues 38–62 and 90–113; these read WNTIARSAGLKRTGKSCRLRWLNYL and WSKIAKHLPGRTDNEIKNYWNRTR.

Expressed only in flowers.

Its subcellular location is the nucleus. Transcription factor. The sequence is that of Myb-related protein 340 from Antirrhinum majus (Garden snapdragon).